The primary structure comprises 149 residues: Cytochrome c-type biogenesis protein CcmE (149 aa).

The Cytoplasmic segment spans residues 1-7; that stretch reads MKARHKR. A helical; Signal-anchor for type II membrane protein transmembrane segment spans residues 8-28; sequence LGLIVAGLAALGLGAALVLSA. Topologically, residues 29–149 are periplasmic; the sequence is FQKNLVFFFT…GAPALAGALK (121 aa). The heme site is built by histidine 123 and tyrosine 127.

It belongs to the CcmE/CycJ family.

The protein resides in the cell inner membrane. In terms of biological role, heme chaperone required for the biogenesis of c-type cytochromes. Transiently binds heme delivered by CcmC and transfers the heme to apo-cytochromes in a process facilitated by CcmF and CcmH. This Polaromonas naphthalenivorans (strain CJ2) protein is Cytochrome c-type biogenesis protein CcmE.